The following is a 117-amino-acid chain: Appetite-regulating hormone (117 aa).

The first 23 residues, M1–A23, serve as a signal peptide directing secretion. Residue S26 is the site of O-decanoyl serine; alternate attachment. S26 is lipidated: O-hexanoyl serine; alternate. The O-octanoyl serine; alternate moiety is linked to residue S26. The segment at S29 to G67 is disordered. The segment covering E31 to K43 has biased composition (basic and acidic residues). Positions A52–Q75 are cleaved as a propeptide — removed in mature form. L98 carries the leucine amide modification. The propeptide at G99–K117 is removed in mature form.

The protein belongs to the motilin family. In terms of processing, O-octanoylated by GOAT/MBOAT4. O-octanoylation is essential for ghrelin activity. Post-translationally, amidation of Leu-98 is essential for obestatin activity.

The protein resides in the secreted. In terms of biological role, ghrelin is the ligand for growth hormone secretagogue receptor type 1 (GHSR). Induces the release of growth hormone from the pituitary. Has an appetite-stimulating effect, induces adiposity and stimulates gastric acid secretion. Involved in growth regulation. Its function is as follows. Obestatin may be the ligand for GPR39. May have an appetite-reducing effect resulting in decreased food intake. May reduce gastric emptying activity and jejunal motility. This is Appetite-regulating hormone (GHRL) from Papio hamadryas (Hamadryas baboon).